Reading from the N-terminus, the 90-residue chain is High mobility group nucleosome-binding domain-containing protein 4 (90 aa).

The segment at 1 to 90 (MPKRKAKGDA…QKAEGTGDAK (90 aa)) is disordered. Basic and acidic residues predominate over residues 7–23 (KGDAKGDKGKVKDEPQR). ADP-ribosylserine is present on Ser29. The span at 37-64 (PEPRPKKAPAKKGEKLAKGRKGKAEVSK) shows a compositional bias: basic and acidic residues. Positions 65 to 83 (DGNNPAKNRDASTVQSQKA) are enriched in polar residues. Residue Ser80 is modified to Phosphoserine. Position 82 is an N6-acetyllysine (Lys82).

The protein belongs to the HMGN family.

Its subcellular location is the nucleus. This is High mobility group nucleosome-binding domain-containing protein 4 (HMGN4) from Bos taurus (Bovine).